Here is a 311-residue protein sequence, read N- to C-terminus: MKWSEISVHTTNEAVEPITNILHEAGASGVVIEDPLDLVKERENVYGEIYQLDPNDYPEEGVIVKAYLPMNSFLMETVDEIKEAINNLLLYDIDLGRNTLSICEVNEEEWATAWKKYYHPVKISEKFTIVPTWEEYTPVHSDELIIEMDPGMAFGTGTHPTTVLCIQALERYVKENDTVIDVGTGSGILSVAAAMVGAKDIQAFDLDTVAVESAKQNIELNGVSEQVTVKQNNLLDGISGEHDVIVANILAEVILRFTDQAYDLLKKDGYFITSGIIGQKKLQVKTALEEAGFDIVEVLSMEDWVSIIAKK.

S-adenosyl-L-methionine is bound by residues Thr162, Gly183, Asp205, and Asn248.

This sequence belongs to the methyltransferase superfamily. PrmA family.

It is found in the cytoplasm. The catalysed reaction is L-lysyl-[protein] + 3 S-adenosyl-L-methionine = N(6),N(6),N(6)-trimethyl-L-lysyl-[protein] + 3 S-adenosyl-L-homocysteine + 3 H(+). In terms of biological role, methylates ribosomal protein L11. The protein is Ribosomal protein L11 methyltransferase of Bacillus pumilus (strain SAFR-032).